A 683-amino-acid chain; its full sequence is uncharacterized protein (683 aa).

Coiled coils occupy residues proline 62–arginine 124, threonine 155–glutamine 259, and lysine 346–valine 376. A disordered region spans residues glutamine 213–glycine 237.

This is an uncharacterized protein from Invertebrate iridescent virus 3 (IIV-3).